The sequence spans 281 residues: DegV domain-containing protein CPE2509 (281 aa).

Residues 4–279 (IAIITDSSCD…PGMVGVSIQK (276 aa)) form the DegV domain. Hexadecanoate contacts are provided by threonine 60 and serine 93.

Its function is as follows. May bind long-chain fatty acids, such as palmitate, and may play a role in lipid transport or fatty acid metabolism. In Clostridium perfringens (strain 13 / Type A), this protein is DegV domain-containing protein CPE2509.